Consider the following 148-residue polypeptide: 3-hydroxyacyl-[acyl-carrier-protein] dehydratase FabZ (148 aa).

His48 is an active-site residue.

The protein belongs to the thioester dehydratase family. FabZ subfamily.

Its subcellular location is the cytoplasm. It carries out the reaction a (3R)-hydroxyacyl-[ACP] = a (2E)-enoyl-[ACP] + H2O. In terms of biological role, involved in unsaturated fatty acids biosynthesis. Catalyzes the dehydration of short chain beta-hydroxyacyl-ACPs and long chain saturated and unsaturated beta-hydroxyacyl-ACPs. The polypeptide is 3-hydroxyacyl-[acyl-carrier-protein] dehydratase FabZ (Campylobacter fetus subsp. fetus (strain 82-40)).